The following is a 341-amino-acid chain: S-adenosylmethionine:tRNA ribosyltransferase-isomerase (341 aa).

The protein belongs to the QueA family. As to quaternary structure, monomer.

It localises to the cytoplasm. It carries out the reaction 7-aminomethyl-7-carbaguanosine(34) in tRNA + S-adenosyl-L-methionine = epoxyqueuosine(34) in tRNA + adenine + L-methionine + 2 H(+). It participates in tRNA modification; tRNA-queuosine biosynthesis. In terms of biological role, transfers and isomerizes the ribose moiety from AdoMet to the 7-aminomethyl group of 7-deazaguanine (preQ1-tRNA) to give epoxyqueuosine (oQ-tRNA). The sequence is that of S-adenosylmethionine:tRNA ribosyltransferase-isomerase from Citrifermentans bemidjiense (strain ATCC BAA-1014 / DSM 16622 / JCM 12645 / Bem) (Geobacter bemidjiensis).